Here is a 200-residue protein sequence, read N- to C-terminus: Polyadenylate-binding protein 1-like 2 (200 aa).

2 consecutive RRM domains span residues 2–80 (ASLY…WSQR) and 90–166 (GNVF…RFKS). The disordered stretch occupies residues 170–200 (REAERGAWARQSTSADVKDFEEDTDEEATLR). Positions 188 to 200 (DFEEDTDEEATLR) are enriched in acidic residues.

The protein is Polyadenylate-binding protein 1-like 2 (PABPC1L2A) of Homo sapiens (Human).